The sequence spans 132 residues: Protein NrdI (132 aa).

It belongs to the NrdI family.

In terms of biological role, probably involved in ribonucleotide reductase function. The polypeptide is Protein NrdI (Agrobacterium fabrum (strain C58 / ATCC 33970) (Agrobacterium tumefaciens (strain C58))).